We begin with the raw amino-acid sequence, 355 residues long: tRNA-specific 2-thiouridylase MnmA (355 aa).

ATP-binding positions include 7–14 (GLSGGVDS) and Leu33. Catalysis depends on Cys94, which acts as the Nucleophile. Cys94 and Cys193 are disulfide-bonded. ATP is bound at residue Gly119. The interval 143–145 (KDQ) is interaction with tRNA. Cys193 serves as the catalytic Cysteine persulfide intermediate. Positions 298–299 (RY) are interaction with tRNA.

Belongs to the MnmA/TRMU family.

The protein localises to the cytoplasm. It catalyses the reaction S-sulfanyl-L-cysteinyl-[protein] + uridine(34) in tRNA + AH2 + ATP = 2-thiouridine(34) in tRNA + L-cysteinyl-[protein] + A + AMP + diphosphate + H(+). In terms of biological role, catalyzes the 2-thiolation of uridine at the wobble position (U34) of tRNA, leading to the formation of s(2)U34. The chain is tRNA-specific 2-thiouridylase MnmA from Acaryochloris marina (strain MBIC 11017).